A 296-amino-acid chain; its full sequence is MKKLPLPARTYSEMLNKCSEGMMQINVRNNFITHFPTFLQKEQQYRILSSTGQLFTYDRTHPLEPTTLVVGNLTKVKLEKLYENNLRDKNKPARTYYDDMLVSSGEKCPFCGDIGQTKNIDHFLPIAHYPEFSVMPINLVPSCRDCNMGEKGQVFAVDEVHQAIHPYIDKDIFFREQWVYANFVSGTPGAISFYVECPANWRQEDKHRALHHFKLLNIANRYRLEAGKHLSEVITQRNSFVKVIRKYSSTATFQQLQSEFIEANLKPIIDLNDFPNYWKRVMYQCLANSEDFFRGI.

In Escherichia phage lambda (Bacteriophage lambda), this protein is Protein ea31 (ea31).